The sequence spans 556 residues: MQFDYIIIGAGSAGNVLATRLTEDPNTSVLLLEAGGPDYRFDFRTQMPAALAFPLQGKRYNWAYETEPEPFMNNRRMECGRGKGLGGSSLINGMCYIRGNALDLDNWAQEPGLENWSYLDCLPYYRKAETRDVGENDYHGGDGPVSVTTSKPGVNPLFEAMIEAGVQAGYPRTDDLNGYQQEGFGPMDRTVTPQGRRASTARGYLDQAKSRPNLTIRTHAMTDHIIFDGKRAVGVEWLEGDSTIPTRATANKEVLLCAGAIASPQILQRSGVGNAELLAEFDIPLVHELPGVGENLQDHLEMYLQYECKEPVSLYPALQWWNQPKIGAEWLFGGTGVGASNHFEAGGFIRSREEFAWPNIQYHFLPVAINYNGSNAVKEHGFQCHVGSMRSPSRGHVRIKSRDPHQHPAILFNYMSHEQDWQEFRDAIRITREIMHQPALDQYRGREISPGVECQTDEQLDEFVRNHAETAFHPCGTCKMGYDEMSVVDGEGRVHGLEGLRVVDASIMPQIITGNLNATTIMIGEKIADMIRGQEALSRSTAGYFVANGMPVRAKK.

Position 4–33 (4–33 (DYIIIGAGSAGNVLATRLTEDPNTSVLLLE)) interacts with FAD. His473 (proton acceptor) is an active-site residue.

It belongs to the GMC oxidoreductase family. The cofactor is FAD.

The catalysed reaction is choline + A = betaine aldehyde + AH2. It carries out the reaction betaine aldehyde + NAD(+) + H2O = glycine betaine + NADH + 2 H(+). The protein operates within amine and polyamine biosynthesis; betaine biosynthesis via choline pathway; betaine aldehyde from choline (cytochrome c reductase route): step 1/1. Its function is as follows. Involved in the biosynthesis of the osmoprotectant glycine betaine. Catalyzes the oxidation of choline to betaine aldehyde and betaine aldehyde to glycine betaine at the same rate. This Shigella flexneri serotype 5b (strain 8401) protein is Oxygen-dependent choline dehydrogenase.